We begin with the raw amino-acid sequence, 237 residues long: Sugar fermentation stimulation protein homolog (237 aa).

The protein belongs to the SfsA family.

The polypeptide is Sugar fermentation stimulation protein homolog (Actinobacillus pleuropneumoniae serotype 5b (strain L20)).